We begin with the raw amino-acid sequence, 165 residues long: E3 ubiquitin-protein ligase RNF181 (165 aa).

An RING-type; atypical zinc finger spans residues 88 to 129 (CPVCLLEFEEEETVIEMPCHHLFHSNCILPWLSKTNSCPLCR). The disordered stretch occupies residues 136–165 (DDSYEEHKKDKARRQQQQHRLENLHGAMYT). Phosphothreonine is present on Thr165.

Belongs to the RNF181 family. In terms of assembly, directly interacts with ITGA2B and, as a result, with integrin ITGA2B/ITGB3. There is no evidence that integrin ITGA2B/ITGB3 is an endogenous substrate for RNF181-directed ubiquitination. Auto-ubiquitinated as part of the enzymatic reaction.

The enzyme catalyses S-ubiquitinyl-[E2 ubiquitin-conjugating enzyme]-L-cysteine + [acceptor protein]-L-lysine = [E2 ubiquitin-conjugating enzyme]-L-cysteine + N(6)-ubiquitinyl-[acceptor protein]-L-lysine.. Its pathway is protein modification; protein ubiquitination. Functionally, E3 ubiquitin-protein ligase which accepts ubiquitin from an E2 ubiquitin-conjugating enzyme in the form of a thioester and then directly transfers the ubiquitin to targeted substrates. Catalyzes monoubiquitination of 26S proteasome subunit PSMC2/RPT1. The polypeptide is E3 ubiquitin-protein ligase RNF181 (Rnf181) (Rattus norvegicus (Rat)).